A 616-amino-acid chain; its full sequence is MSKNNKKWRNAGLYALLLIVVLALASAFFDRPTQTRETLSYSDFVNRVEANQIERVNLSADRTQAQVPNPSGGPPYLVNLPNDPDLINILTQHNVDIAVQPQSDEGFWFRIASTLFLPILLLVGIFFLFRRAQSGPGSQAMNFGKSKARVQMEPQTQVTFGDVAGIEQAKLELTEVVDFLKNADRFTELGAKIPKGVLLVGPPGTGKTLLAKAVAGEAGVPFFSISGSEFVEMFVGVGASRVRDLFEQAKANAPCIVFIDEIDAVGRQRGAGLGGGNDEREQTLNQLLTEMDGFEGNTGIIIVAATNRPDVLDSALMRPGRFDRQVVVDRPDYAGRREILNVHARGKTLSQDVDLDKIARRTPGFTGADLSNLLNEAAILAARRNLTEISMDEVNDAIDRVLAGPEKKNRVMSEKRKTLVAYHEAGHALVGALMPDYDPVQKISIIPRGRAGGLTWFTPSEDRMESGLYSRSYLQNQMAVALGGRIAEEIIFGEEEVTTGASNDLQQVARVARQMVTRFGMSDRLGPVALGRQGGGVFLGRDIASDRDFSDETAAAIDEEVSQLVDQAYQRAKQVLVENRGILDQLAEILVEKETVDSEELQTLLANNNAKLALLV.

The Cytoplasmic segment spans residues 1–9; the sequence is MSKNNKKWR. Residues 10–30 form a helical membrane-spanning segment; the sequence is NAGLYALLLIVVLALASAFFD. The Lumenal portion of the chain corresponds to 31–108; it reads RPTQTRETLS…VQPQSDEGFW (78 aa). A helical transmembrane segment spans residues 109–129; it reads FRIASTLFLPILLLVGIFFLF. Residues 130-616 lie on the Cytoplasmic side of the membrane; sequence RRAQSGPGSQ…NNNAKLALLV (487 aa). An ATP-binding site is contributed by 201 to 208; that stretch reads GPPGTGKT. H423 is a Zn(2+) binding site. E424 is a catalytic residue. Zn(2+)-binding residues include H427 and D504.

In the central section; belongs to the AAA ATPase family. The protein in the C-terminal section; belongs to the peptidase M41 family. Homohexamer (Potential). Part of a large complex that includes FtsH2 and PSII. Coimmunoprecipitates with YidC. The cofactor is Zn(2+).

The protein localises to the cellular thylakoid membrane. Functionally, acts as a processive, ATP-dependent zinc metallopeptidase for both cytoplasmic and membrane proteins. Plays a role in the quality control of integral membrane proteins. The protein is ATP-dependent zinc metalloprotease FtsH 3 of Synechocystis sp. (strain ATCC 27184 / PCC 6803 / Kazusa).